We begin with the raw amino-acid sequence, 279 residues long: Orotidine 5'-phosphate decarboxylase (279 aa).

Substrate-binding positions include Asp8, Lys30, 58-67 (DLKFHDIPNT), Thr117, Arg177, Gln186, Gly206, and Arg207. The Proton donor role is filled by Lys60.

This sequence belongs to the OMP decarboxylase family. Type 1 subfamily. In terms of assembly, homodimer.

It catalyses the reaction orotidine 5'-phosphate + H(+) = UMP + CO2. It functions in the pathway pyrimidine metabolism; UMP biosynthesis via de novo pathway; UMP from orotate: step 2/2. In terms of biological role, catalyzes the decarboxylation of orotidine 5'-monophosphate (OMP) to uridine 5'-monophosphate (UMP). The chain is Orotidine 5'-phosphate decarboxylase from Campylobacter jejuni subsp. jejuni serotype O:2 (strain ATCC 700819 / NCTC 11168).